Consider the following 38-residue polypeptide: Photosystem II reaction center protein L (38 aa).

The helical transmembrane segment at 17–37 threads the bilayer; it reads SLFWGLLLIFVLAILFSSYIF.

Belongs to the PsbL family. As to quaternary structure, PSII is composed of 1 copy each of membrane proteins PsbA, PsbB, PsbC, PsbD, PsbE, PsbF, PsbH, PsbI, PsbJ, PsbK, PsbL, PsbM, PsbT, PsbX, PsbY, PsbZ, Psb30/Ycf12, at least 3 peripheral proteins of the oxygen-evolving complex and a large number of cofactors. It forms dimeric complexes.

It localises to the plastid. The protein localises to the cyanelle thylakoid membrane. Functionally, one of the components of the core complex of photosystem II (PSII). PSII is a light-driven water:plastoquinone oxidoreductase that uses light energy to abstract electrons from H(2)O, generating O(2) and a proton gradient subsequently used for ATP formation. It consists of a core antenna complex that captures photons, and an electron transfer chain that converts photonic excitation into a charge separation. This subunit is found at the monomer-monomer interface and is required for correct PSII assembly and/or dimerization. The polypeptide is Photosystem II reaction center protein L (Cyanophora paradoxa).